Reading from the N-terminus, the 288-residue chain is ATP synthase gamma chain (288 aa).

It belongs to the ATPase gamma chain family. In terms of assembly, F-type ATPases have 2 components, CF(1) - the catalytic core - and CF(0) - the membrane proton channel. CF(1) has five subunits: alpha(3), beta(3), gamma(1), delta(1), epsilon(1). CF(0) has three main subunits: a, b and c.

It is found in the cell inner membrane. In terms of biological role, produces ATP from ADP in the presence of a proton gradient across the membrane. The gamma chain is believed to be important in regulating ATPase activity and the flow of protons through the CF(0) complex. The chain is ATP synthase gamma chain from Trichlorobacter lovleyi (strain ATCC BAA-1151 / DSM 17278 / SZ) (Geobacter lovleyi).